A 465-amino-acid polypeptide reads, in one-letter code: Soluble pyridine nucleotide transhydrogenase (465 aa).

36-45 (ERYDNVGGGC) is a binding site for FAD.

This sequence belongs to the class-I pyridine nucleotide-disulfide oxidoreductase family. FAD serves as cofactor.

The protein localises to the cytoplasm. The enzyme catalyses NAD(+) + NADPH = NADH + NADP(+). Functionally, conversion of NADPH, generated by peripheral catabolic pathways, to NADH, which can enter the respiratory chain for energy generation. The protein is Soluble pyridine nucleotide transhydrogenase of Sodalis glossinidius (strain morsitans).